Consider the following 253-residue polypeptide: Acidic endochitinase Q (253 aa).

An N-terminal signal peptide occupies residues 1 to 24 (MEFSGSPMALFCCVFFLFLTGSLA). Glu-92 serves as the catalytic Proton donor. Cys-212 and Cys-244 are disulfide-bonded.

It belongs to the glycosyl hydrolase 19 family. Chitinase class I subfamily.

The protein resides in the secreted. The enzyme catalyses Random endo-hydrolysis of N-acetyl-beta-D-glucosaminide (1-&gt;4)-beta-linkages in chitin and chitodextrins.. In terms of biological role, defense against chitin-containing fungal pathogens. The chain is Acidic endochitinase Q from Nicotiana tabacum (Common tobacco).